Reading from the N-terminus, the 212-residue chain is Ribonuclease P protein component 3 (212 aa).

The protein belongs to the eukaryotic/archaeal RNase P protein component 3 family. Consists of a catalytic RNA component and at least 4-5 protein subunits.

Its subcellular location is the cytoplasm. The catalysed reaction is Endonucleolytic cleavage of RNA, removing 5'-extranucleotides from tRNA precursor.. Part of ribonuclease P, a protein complex that generates mature tRNA molecules by cleaving their 5'-ends. The polypeptide is Ribonuclease P protein component 3 (Pyrococcus abyssi (strain GE5 / Orsay)).